A 241-amino-acid polypeptide reads, in one-letter code: Proteasome subunit beta type-6 (241 aa).

Positions 1–19 (MATIASEYSSEASNTPIEH) are excised as a propeptide.

Belongs to the peptidase T1B family. The 26S proteasome consists of a 20S proteasome core and two 19S regulatory subunits. The 20S proteasome core is composed of 28 subunits that are arranged in four stacked rings, resulting in a barrel-shaped structure. The two end rings are each formed by seven alpha subunits, and the two central rings are each formed by seven beta subunits. The catalytic chamber with the active sites is on the inside of the barrel.

It is found in the cytoplasm. The protein localises to the nucleus. Functionally, non-catalytic component of the proteasome which degrades poly-ubiquitinated proteins in the cytoplasm and in the nucleus. It is essential for the regulated turnover of proteins and for the removal of misfolded proteins. The proteasome is a multicatalytic proteinase complex that is characterized by its ability to cleave peptides with Arg, Phe, Tyr, Leu, and Glu adjacent to the leaving group at neutral or slightly basic pH. It has an ATP-dependent proteolytic activity. The polypeptide is Proteasome subunit beta type-6 (PRE7) (Saccharomyces cerevisiae (strain ATCC 204508 / S288c) (Baker's yeast)).